We begin with the raw amino-acid sequence, 119 residues long: Beta-2-microglobulin (119 aa).

An N-terminal signal peptide occupies residues 1–20 (MARFVVVALLVQLSLFGLEA). Positions 25–114 (PKIQVYSRYP…VTFSTPKTVK (90 aa)) constitute an Ig-like C1-type domain. Cys-45 and Cys-100 form a disulfide bridge.

This sequence belongs to the beta-2-microglobulin family. Heterodimer of an alpha chain and a beta chain. Beta-2-microglobulin is the beta-chain of major histocompatibility complex class I molecules.

It localises to the secreted. In terms of biological role, component of the class I major histocompatibility complex (MHC). Involved in the presentation of peptide antigens to the immune system. This is Beta-2-microglobulin (B2M) from Saguinus imperator (Emperor tamarin).